Consider the following 312-residue polypeptide: MASTDPGTGTPLDESVPGIKRAMRQSTKNTPRAGRNLPAAIAVGLSIGGVLVATLVFAPRIWVVLCAGAIFVASHEVVRRLREAGYVIPAIPLLIGGQFTVWLTWPYRTVGALAGFGATVVVCMIWRLVMHDNSKQHESREALAGPPVSNYLRDASATVFLAAWVPLFASFAALLVYPKDGAGRVFCLMIAVVASDVGGYTVGVLFGKHPLVPRISPNKSWEGFAGSLVCGTTATILTATFLAGKTPWVGALLSFVLVLTCTLGDLVESQVKRDLGIKDMGRLLPGHGGLMDRLDGVLPSAVVAWTMLTLLP.

Residues 1 to 31 (MASTDPGTGTPLDESVPGIKRAMRQSTKNTP) are disordered. Transmembrane regions (helical) follow at residues 37–57 (LPAAIAVGLSIGGVLVATLVF), 58–78 (APRIWVVLCAGAIFVASHEVV), 85–105 (GYVIPAIPLLIGGQFTVWLTW), 110–130 (VGALAGFGATVVVCMIWRLVM), 157–177 (ATVFLAAWVPLFASFAALLVY), 186–206 (FCLMIAVVASDVGGYTVGVLF), 223–243 (GFAGSLVCGTTATILTATFLA), and 247–267 (PWVGALLSFVLVLTCTLGDLV).

Belongs to the CDS family.

The protein localises to the cell membrane. It carries out the reaction a 1,2-diacyl-sn-glycero-3-phosphate + CTP + H(+) = a CDP-1,2-diacyl-sn-glycerol + diphosphate. Its pathway is phospholipid metabolism; CDP-diacylglycerol biosynthesis; CDP-diacylglycerol from sn-glycerol 3-phosphate: step 3/3. The sequence is that of Phosphatidate cytidylyltransferase (cdsA) from Mycobacterium leprae (strain TN).